Reading from the N-terminus, the 332-residue chain is DNA packaging protein (332 aa).

Residues M1–R207 are ATPase. G24–S31 lines the ATP pocket. Positions K233 to Q332 are DNA-binding.

The protein belongs to the phi29likevirus gp16 family. In terms of assembly, homopentamer. Interacts with the packaging RNA (pRNA). Part of a DNA-gp3-gp16 complex.

The catalysed reaction is ATP + H2O = ADP + phosphate + H(+). In terms of biological role, ATPase required for the genome encapsidation reaction. Part of the active packaging motor via the binding to the packaging RNA (pRNA), itself fixed to the head-tail connector at the unique portal vertex of the prohead. Binds and supercoils the pre-formed, unit-length DNA bound to gp3 to produce an initiation complex for DNA packaging. Provides the energy to actively pump the viral DNA into the prohead. Approximately one molecule of ATP is used in the packaging of 2 bp of viral DNA. ATP hydrolysis results in a conformational change that causes the arginine/lysine finger of one subunit to move into the active site of its neighbor, where it interacts with the negatively charged oxygens on the gamma-phosphate of ATP. After packaging, the ATPase and the pRNA are released from the prohead. The sequence is that of DNA packaging protein (16) from Bacillus phage phi29 (Bacteriophage phi-29).